Consider the following 219-residue polypeptide: Guanylate kinase (219 aa).

In terms of domain architecture, Guanylate kinase-like spans 15–194; the sequence is GLMFVLSSPS…AFESVKAILR (180 aa). 22 to 29 contributes to the ATP binding site; it reads SPSGAGKT.

Belongs to the guanylate kinase family.

The protein resides in the cytoplasm. The enzyme catalyses GMP + ATP = GDP + ADP. Essential for recycling GMP and indirectly, cGMP. This chain is Guanylate kinase, found in Rhodopseudomonas palustris (strain BisB5).